The primary structure comprises 282 residues: Fibrinogen-like protein A (282 aa).

The first 24 residues, 1–24, serve as a signal peptide directing secretion; that stretch reads MFSFIMKAAILLILVGCISFCISS. Residues 61 to 281 form the Fibrinogen C-terminal domain; the sequence is SHSPEYPRDC…FAEMKLRNRS (221 aa). Cystine bridges form between Cys-70–Cys-101 and Cys-224–Cys-240.

The sequence is that of Fibrinogen-like protein A from Apostichopus parvimensis (Warty sea cucumber).